The following is a 467-amino-acid chain: ATP synthase subunit beta (467 aa).

150 to 157 (GGAGVGKT) provides a ligand contact to ATP.

The protein belongs to the ATPase alpha/beta chains family. F-type ATPases have 2 components, CF(1) - the catalytic core - and CF(0) - the membrane proton channel. CF(1) has five subunits: alpha(3), beta(3), gamma(1), delta(1), epsilon(1). CF(0) has three main subunits: a(1), b(2) and c(9-12). The alpha and beta chains form an alternating ring which encloses part of the gamma chain. CF(1) is attached to CF(0) by a central stalk formed by the gamma and epsilon chains, while a peripheral stalk is formed by the delta and b chains.

Its subcellular location is the cell inner membrane. The catalysed reaction is ATP + H2O + 4 H(+)(in) = ADP + phosphate + 5 H(+)(out). Produces ATP from ADP in the presence of a proton gradient across the membrane. The catalytic sites are hosted primarily by the beta subunits. This Aliivibrio fischeri (strain MJ11) (Vibrio fischeri) protein is ATP synthase subunit beta.